Here is a 224-residue protein sequence, read N- to C-terminus: Ribose-5-phosphate isomerase A (224 aa).

Substrate is bound by residues Thr26–Thr29, Asp82–Asp85, and Lys95–Gly98. Glu104 serves as the catalytic Proton acceptor. Residue Lys122 participates in substrate binding.

The protein belongs to the ribose 5-phosphate isomerase family. As to quaternary structure, homodimer.

It catalyses the reaction aldehydo-D-ribose 5-phosphate = D-ribulose 5-phosphate. Its pathway is carbohydrate degradation; pentose phosphate pathway; D-ribose 5-phosphate from D-ribulose 5-phosphate (non-oxidative stage): step 1/1. Catalyzes the reversible conversion of ribose-5-phosphate to ribulose 5-phosphate. The sequence is that of Ribose-5-phosphate isomerase A from Streptococcus suis (strain 98HAH33).